A 724-amino-acid polypeptide reads, in one-letter code: RINT1-like protein (724 aa).

The 562-residue stretch at 163 to 724 (RLHAVQAQSL…LERRMDIKMF (562 aa)) folds into the RINT1/TIP20 domain.

Belongs to the RINT1 family.

In terms of biological role, during cytokinesis in male meiotic cells, required for completion of cleavage furrow ingression possibly in conjunction with Zw10. Required for maintenance of Golgi stack number and morphology. Essential for acroblast assembly. This chain is RINT1-like protein, found in Drosophila melanogaster (Fruit fly).